Consider the following 529-residue polypeptide: UDP-glucuronosyltransferase 2B23 (529 aa).

Residues 1 to 24 (MSVKWTSVILLIQLSFYFSSGSCG) form the signal peptide. N-linked (GlcNAc...) asparagine glycosylation is found at asparagine 67 and asparagine 68. Residues 494–514 (IGFLLACVATVIFIIMKCCLF) form a helical membrane-spanning segment.

It belongs to the UDP-glycosyltransferase family. In terms of tissue distribution, expressed in several tissues, including the prostate, mammary gland, epididymis, testis and ovary.

The protein resides in the microsome membrane. It localises to the endoplasmic reticulum membrane. The enzyme catalyses glucuronate acceptor + UDP-alpha-D-glucuronate = acceptor beta-D-glucuronoside + UDP + H(+). In terms of biological role, UDPGTs are of major importance in the conjugation and subsequent elimination of potentially toxic xenobiotics and endogenous compounds. This isozyme has glucuronidating capacity on 6 steroids and the bile acid, hyodeoxycholic acid. May potentially play an important role in estrogen and androgen catabolism in peripheral steroid target tissues. This is UDP-glucuronosyltransferase 2B23 (UGT2B23) from Macaca fascicularis (Crab-eating macaque).